Consider the following 553-residue polypeptide: Arginine--tRNA ligase (553 aa).

Positions 130 to 140 match the 'HIGH' region motif; it reads ANPTGPIHLGG.

This sequence belongs to the class-I aminoacyl-tRNA synthetase family. In terms of assembly, monomer.

Its subcellular location is the cytoplasm. It catalyses the reaction tRNA(Arg) + L-arginine + ATP = L-arginyl-tRNA(Arg) + AMP + diphosphate. The polypeptide is Arginine--tRNA ligase (Corynebacterium aurimucosum (strain ATCC 700975 / DSM 44827 / CIP 107346 / CN-1) (Corynebacterium nigricans)).